The following is a 488-amino-acid chain: Intron-encoded DNA endonuclease I-AniI (488 aa).

The segment at 1–169 is cobA exon 1 encoded; sequence MRILKSHPLL…DIVEFIWGGL (169 aa). The interval 170-488 is cobA intron encoded; sequence YTDEPQCGDV…SEKIKIPSNY (319 aa).

It in the C-terminal section; belongs to the LAGLIDADG endonuclease family. In terms of assembly, homodimer. Mg(2+) serves as cofactor. In terms of processing, the mature protein may arise from proteolytic cleavage of an in-frame translation of cobA exon 1 plus intron, containing the I-AniI open reading frame. Cleavage may take place close to Met-213 resulting in an active endonuclease/maturase of about 30 kDa.

The protein resides in the mitochondrion. Mitochondrial DNA endonuclease and mRNA maturase involved in intron homing and required for splicing of the cytochrome b (cobA) gene intron, containing its own coding sequence. The protein stimulates the intrinsic ribozyme activity of the intron through binding to and stabilizing specific secondary and tertiary structure elements in the RNA. As an endonuclease it introduces a specific double-strand break at the junction of the two exons the cobA gene and thus mediates the insertion of an intron, containing its own coding sequence (group I intron), into an intronless gene. Recognizes with limited specificity and cleaves the sequence 5'-GAGGAGGTTTCTCTGTA-3'. The proteins RNA and DNA recognition and binding surfaces are independent. The protein is Intron-encoded DNA endonuclease I-AniI (I-AniI) of Emericella nidulans (Aspergillus nidulans).